The following is a 769-amino-acid chain: Spastin (769 aa).

Positions 1-100 are disordered; sequence MVRTKNQSSS…TSGNVPRGGQ (100 aa). Over 1–113 the chain is Cytoplasmic; it reads MVRTKNQSSS…KQNLYVVSFP (113 aa). Residues 1–201 form a required for localization to punctate cytoplasmic foci region; that stretch reads MVRTKNQSSS…QTLEMAASRG (201 aa). Over residues 8–19 the composition is skewed to low complexity; sequence SSSSSASSSTKS. Gly residues predominate over residues 24 to 33; the sequence is SGGGGGGGGS. Over residues 54–63 the composition is skewed to polar residues; it reads SSKLSSNRQR. Over residues 64–78 the composition is skewed to low complexity; that stretch reads TTTTITTTTTTPGSS. Positions 114 to 134 form an intramembrane region, helical; that stretch reads IIFLFNVLRSLIYQLFCIFRY. The Cytoplasmic portion of the chain corresponds to 135–769; that stretch reads LYGASTKVIY…WSQDYGDITI (635 aa). The tract at residues 199–769 is sufficient for interaction with microtubules and microtubule severing; the sequence is SRGGTGAGGY…WSQDYGDITI (571 aa). The 76-residue stretch at 224-299 folds into the MIT domain; that stretch reads HRRAFEYISK…SMARDRLHFL (76 aa). The disordered stretch occupies residues 314-462; the sequence is KEQPKKQLPH…NAASGSGSGA (149 aa). A compositionally biased stretch (low complexity) spans 334–344; sequence TTTSSGSSSSS. 2 stretches are compositionally biased toward polar residues: residues 395–413 and 434–450; these read NKSQ…STSV and QFSS…RTPI. Residues 451-462 show a composition bias toward low complexity; sequence NNNAASGSGSGA. The interval 452-466 is required for interaction with microtubules; sequence NNAASGSGSGASTPL. Residue 534–541 participates in ATP binding; the sequence is GPPGNGKT.

The protein belongs to the AAA ATPase family. Spastin subfamily. Homohexamer. The homohexamer is stabilized by ATP-binding. The homohexamer may adopt a ring conformation through which microtubules pass prior to being severed. Interacts with microtubules. Interacts with atl; may be involved in microtubule dynamics.

The protein localises to the membrane. It localises to the cytoplasm. The protein resides in the cytoskeleton. It is found in the microtubule organizing center. Its subcellular location is the centrosome. The protein localises to the chromosome. It localises to the lipid droplet. It carries out the reaction n ATP + n H2O + a microtubule = n ADP + n phosphate + (n+1) alpha/beta tubulin heterodimers.. Its function is as follows. ATP-dependent microtubule severing protein. Stimulates microtubule minus-end depolymerization and poleward microtubule flux in the mitotic spindle. Regulates microtubule stability in the neuromuscular junction synapse. Involved in lipid metabolism by regulating the size and distribution of lipid droplets. Involved in axon regeneration by regulating microtubule severing. The polypeptide is Spastin (Drosophila virilis (Fruit fly)).